The sequence spans 1132 residues: Telomerase reverse transcriptase (1132 aa).

The interval 1 to 230 (MPRAPRCRAV…ARRRGGSASR (230 aa)) is RNA-interacting domain 1. Residues 58–197 (VPWDARPPPA…PHASGPRRRL (140 aa)) form a GQ motif region. The required for regulating specificity for telomeric DNA and for processivity for primer elongation stretch occupies residues 137-141 (WGLLL). A disordered region spans residues 210–320 (AGVPLGLPAP…SRPPRPWDTP (111 aa)). Over residues 213–234 (PLGLPAPGARRRGGSASRSLPL) the composition is skewed to low complexity. A Bipartite nuclear localization signal motif is present at residues 222–240 (RRRGGSASRSLPLPKRPRR). Position 227 is a phosphoserine; by PKB/AKT1 (serine 227). The linker stretch occupies residues 231–324 (SLPLPKRPRR…RPWDTPCPPV (94 aa)). The segment covering 293-304 (RHSHPSVGRQHH) has biased composition (basic residues). Positions 301–538 (RQHHAGPPST…VPAAEHRLRE (238 aa)) are required for oligomerization. The segment covering 310–320 (TSRPPRPWDTP) has biased composition (pro residues). An RNA-interacting domain 2 region spans residues 325–550 (YAETKHFLYS…LAKFLHWLMS (226 aa)). A TFLY; involved in RNA binding motif is present at residues 328–333 (TKHFLY). The interval 376-521 (PRRLPRLPQR…MSVRDCAWLR (146 aa)) is QFP motif. Positions 397–417 (LGNHAQCPYGVLLKTHCPLRA) are CP motif. Residue serine 457 is modified to Phosphoserine; by DYRK2. The 331-residue stretch at 605–935 (EVRQHREARP…GLFPWCGLLL (331 aa)) folds into the Reverse transcriptase domain. A Phosphotyrosine; by SRC-type Tyr-kinases modification is found at tyrosine 707. Mg(2+) is bound by residues aspartate 712, aspartate 868, and aspartate 869. Residues 914-928 (LGGTAFVQMPAHGLF) are required for oligomerization. The primer grip sequence stretch occupies residues 930-934 (WCGLL). The segment at 936–1132 (DTRTLEVQSD…LPSDFKTILD (197 aa)) is CTE.

Belongs to the reverse transcriptase family. Telomerase subfamily. Catalytic component of the telomerase holoenzyme complex composed of one molecule of TERT, one molecule of WRAP53/TCAB1, two molecules of H/ACA ribonucleoprotein complex subunits DKC1, NOP10, NHP2 and GAR1, and a telomerase RNA template component (TERC). The telomerase holoenzyme complex is associated with TEP1, SMG6/EST1A and POT1. The molecular chaperone HSP90/P23 complex is required for correct assembly and stabilization of the active telomerase. Interacts directly with HSP90A and PTGES3. Interacts with HSPA1A; the interaction occurs in the absence of TERC and dissociates once the complex has formed. Interacts with RAN; the interaction promotes nuclear export of TERT. Interacts with XPO1. Interacts with PTPN11; the interaction retains TERT in the nucleus. Interacts with NCL (via RRM1 and C-terminal RRM4/Arg/Gly-rich domains); the interaction is important for nucleolar localization of TERT. Interacts with SMARCA4 (via the bromodomain); the interaction regulates Wnt-mediated signaling. Interacts with MCRS1 (isoform MCRS2); the interaction inhibits in vitro telomerase activity. Interacts with PIF1; the interaction has no effect on the elongation activity of TERT. Interacts with PML; the interaction recruits TERT to PML bodies and inhibits telomerase activity. Interacts with GNL3L. Interacts with isoform 1 and isoform 2 of NVL. Interacts with DHX36. Interacts with ATF7. Post-translationally, phosphorylation at Tyr-707 under oxidative stress leads to translocation of TERT to the cytoplasm and reduces its antiapoptotic activity. Dephosphorylated by SHP2/PTPN11 leading to nuclear retention. Phosphorylation at Ser-227 by the AKT pathway promotes nuclear location. Phosphorylation at the G2/M phase at Ser-457 by DYRK2 promotes ubiquitination by the EDVP complex and degradation. In terms of processing, ubiquitinated by the EDVP complex, a E3 ligase complex following phosphorylation at Ser-457 by DYRK2. Ubiquitinated leads to proteasomal degradation. (Microbial infection) In case of infection by HIV-1, the EDVP complex is hijacked by HIV-1 via interaction between HIV-1 Vpr and DCAF1/VPRBP, leading to ubiquitination and degradation. As to expression, expressed at a high level in thymocyte subpopulations, at an intermediate level in tonsil T-lymphocytes, and at a low to undetectable level in peripheral blood T-lymphocytes.

It is found in the nucleus. The protein localises to the nucleolus. It localises to the nucleoplasm. Its subcellular location is the chromosome. The protein resides in the telomere. It is found in the cytoplasm. The protein localises to the PML body. The catalysed reaction is DNA(n) + a 2'-deoxyribonucleoside 5'-triphosphate = DNA(n+1) + diphosphate. Its function is as follows. Telomerase is a ribonucleoprotein enzyme essential for the replication of chromosome termini in most eukaryotes. Active in progenitor and cancer cells. Inactive, or very low activity, in normal somatic cells. Catalytic component of the teleromerase holoenzyme complex whose main activity is the elongation of telomeres by acting as a reverse transcriptase that adds simple sequence repeats to chromosome ends by copying a template sequence within the RNA component of the enzyme. Catalyzes the RNA-dependent extension of 3'-chromosomal termini with the 6-nucleotide telomeric repeat unit, 5'-TTAGGG-3'. The catalytic cycle involves primer binding, primer extension and release of product once the template boundary has been reached or nascent product translocation followed by further extension. More active on substrates containing 2 or 3 telomeric repeats. Telomerase activity is regulated by a number of factors including telomerase complex-associated proteins, chaperones and polypeptide modifiers. Modulates Wnt signaling. Plays important roles in aging and antiapoptosis. The protein is Telomerase reverse transcriptase (TERT) of Homo sapiens (Human).